Here is a 216-residue protein sequence, read N- to C-terminus: FMN-dependent NADH:quinone oxidoreductase (216 aa).

Residues S10 and 15–17 each bind FMN; that span reads SIS.

It belongs to the azoreductase type 1 family. As to quaternary structure, homodimer. It depends on FMN as a cofactor.

It catalyses the reaction 2 a quinone + NADH + H(+) = 2 a 1,4-benzosemiquinone + NAD(+). The catalysed reaction is N,N-dimethyl-1,4-phenylenediamine + anthranilate + 2 NAD(+) = 2-(4-dimethylaminophenyl)diazenylbenzoate + 2 NADH + 2 H(+). In terms of biological role, quinone reductase that provides resistance to thiol-specific stress caused by electrophilic quinones. Functionally, also exhibits azoreductase activity. Catalyzes the reductive cleavage of the azo bond in aromatic azo compounds to the corresponding amines. The sequence is that of FMN-dependent NADH:quinone oxidoreductase from Nocardia farcinica (strain IFM 10152).